A 58-amino-acid chain; its full sequence is Large ribosomal subunit protein bL32 (58 aa).

Disordered regions lie at residues 1 to 22 (MAVP…HWKR) and 39 to 58 (LSGR…DDEE).

The protein belongs to the bacterial ribosomal protein bL32 family.

In Crocosphaera subtropica (strain ATCC 51142 / BH68) (Cyanothece sp. (strain ATCC 51142)), this protein is Large ribosomal subunit protein bL32.